Consider the following 757-residue polypeptide: Kin of IRRE-like protein 1 (757 aa).

The signal sequence occupies residues 1-16 (MLSLLVWILTLSDTFS). Over 17-499 (QGTQTRFSQE…REVLPVGIIA (483 aa)) the chain is Extracellular. Ig-like C2-type domains are found at residues 21 to 115 (TRFS…AKLT), 120 to 216 (PEDT…TSIE), 223 to 299 (PTVT…TNVS), 308 to 387 (PRIV…EVPL), and 392 to 488 (PPII…IQLE). Cys-42 and Cys-100 are joined by a disulfide. Residues Asn-46 and Asn-140 are each glycosylated (N-linked (GlcNAc...) asparagine). Disulfide bonds link Cys-143/Cys-200 and Cys-244/Cys-287. Asn-297 carries N-linked (GlcNAc...) asparagine glycosylation. A disulfide bridge links Cys-329 with Cys-371. A Cell attachment site motif is present at residues 405–407 (RGD). An intrachain disulfide couples Cys-413 to Cys-472. The N-linked (GlcNAc...) asparagine glycan is linked to Asn-471. Residues 500 to 520 (GATIGASILLIFFFIALVFFL) traverse the membrane as a helical segment. The Cytoplasmic portion of the chain corresponds to 521–757 (YRRRKGSRKD…RFQQRMQTHV (237 aa)). Ser-574 bears the Phosphoserine mark. 2 positions are modified to phosphotyrosine; by FYN: Tyr-605 and Tyr-606. Residues Tyr-622 and Tyr-625 each carry the phosphotyrosine modification. Residues 649 to 679 (QLNTYSRGPASDYGPEPTPPGPAAPAGTDTT) form a disordered region. Tyr-724 carries the phosphotyrosine modification.

The protein belongs to the immunoglobulin superfamily. In terms of assembly, interacts with TJP1/ZO-1 and with NPHS2/podocin (via the C-terminus). Interacts with NPHS1/nephrin (via the Ig-like domains); this interaction is dependent on KIRREL1 glycosylation. Homodimer (via the Ig-like domains). Interacts when tyrosine-phosphorylated with GRB2. In terms of processing, phosphorylation probably regulates the interaction with NSH2. Phosphorylated at Tyr-605 and Tyr-606 by FYN, leading to GRB2 binding. Post-translationally, N-glycosylated. Abundantly expressed in kidney. Specifically expressed in podocytes of kidney glomeruli.

It is found in the cell membrane. Required for proper function of the glomerular filtration barrier. It is involved in the maintenance of a stable podocyte architecture with interdigitating foot processes connected by specialized cell-cell junctions, known as the slit diaphragm. It is a signaling protein that needs the presence of TEC kinases to fully trans-activate the transcription factor AP-1. In Homo sapiens (Human), this protein is Kin of IRRE-like protein 1.